Reading from the N-terminus, the 1587-residue chain is Pentafunctional AROM polypeptide (1587 aa).

The tract at residues 1-384 (MIEPTKISIL…YEPRASVVAN (384 aa)) is 3-dehydroquinate synthase. NAD(+)-binding positions include 44 to 46 (DTN), 81 to 84 (EVSK), 114 to 116 (GGV), and aspartate 119. 7-phospho-2-dehydro-3-deoxy-D-arabino-heptonate is bound at residue arginine 130. 139–140 (TT) serves as a coordination point for NAD(+). Positions 146 and 152 each coordinate 7-phospho-2-dehydro-3-deoxy-D-arabino-heptonate. NAD(+) is bound at residue lysine 161. Position 162 (asparagine 162) interacts with 7-phospho-2-dehydro-3-deoxy-D-arabino-heptonate. NAD(+) is bound by residues 179–182 (FLET) and asparagine 190. Glutamate 194 serves as a coordination point for Zn(2+). Residues 194 to 197 (EVIK) and lysine 250 contribute to the 7-phospho-2-dehydro-3-deoxy-D-arabino-heptonate site. Glutamate 260 functions as the Proton acceptor; for 3-dehydroquinate synthase activity in the catalytic mechanism. 7-phospho-2-dehydro-3-deoxy-D-arabino-heptonate is bound by residues 264–268 (RNLLN) and histidine 271. Zn(2+) is bound at residue histidine 271. Residue histidine 275 is the Proton acceptor; for 3-dehydroquinate synthase activity of the active site. Residues histidine 287 and lysine 356 each contribute to the 7-phospho-2-dehydro-3-deoxy-D-arabino-heptonate site. Histidine 287 serves as a coordination point for Zn(2+). An EPSP synthase region spans residues 397–842 (VFPGVSPKST…WDTLRLKFAV (446 aa)). Cysteine 824 serves as the catalytic For EPSP synthase activity. The tract at residues 864–1055 (SASVFIIGMR…KKKQHSFFVS (192 aa)) is shikimate kinase. Residue 871–878 (GMRGAGKT) coordinates ATP. The segment at 1056–1276 (LTLPDLRPAG…AAPGQLSATE (221 aa)) is 3-dehydroquinase. Histidine 1179 acts as the Proton acceptor; for 3-dehydroquinate dehydratase activity in catalysis. Residue lysine 1207 is the Schiff-base intermediate with substrate; for 3-dehydroquinate dehydratase activity of the active site. A shikimate dehydrogenase region spans residues 1289-1587 (KKRFALFGTP…RDAVLGTKAD (299 aa)).

This sequence in the N-terminal section; belongs to the sugar phosphate cyclases superfamily. Dehydroquinate synthase family. In the 2nd section; belongs to the EPSP synthase family. It in the 3rd section; belongs to the shikimate kinase family. The protein in the 4th section; belongs to the type-I 3-dehydroquinase family. This sequence in the C-terminal section; belongs to the shikimate dehydrogenase family. In terms of assembly, homodimer. It depends on Zn(2+) as a cofactor.

Its subcellular location is the cytoplasm. The enzyme catalyses 7-phospho-2-dehydro-3-deoxy-D-arabino-heptonate = 3-dehydroquinate + phosphate. It carries out the reaction 3-dehydroquinate = 3-dehydroshikimate + H2O. It catalyses the reaction shikimate + NADP(+) = 3-dehydroshikimate + NADPH + H(+). The catalysed reaction is shikimate + ATP = 3-phosphoshikimate + ADP + H(+). The enzyme catalyses 3-phosphoshikimate + phosphoenolpyruvate = 5-O-(1-carboxyvinyl)-3-phosphoshikimate + phosphate. The protein operates within metabolic intermediate biosynthesis; chorismate biosynthesis; chorismate from D-erythrose 4-phosphate and phosphoenolpyruvate: step 2/7. It functions in the pathway metabolic intermediate biosynthesis; chorismate biosynthesis; chorismate from D-erythrose 4-phosphate and phosphoenolpyruvate: step 3/7. It participates in metabolic intermediate biosynthesis; chorismate biosynthesis; chorismate from D-erythrose 4-phosphate and phosphoenolpyruvate: step 4/7. Its pathway is metabolic intermediate biosynthesis; chorismate biosynthesis; chorismate from D-erythrose 4-phosphate and phosphoenolpyruvate: step 5/7. The protein operates within metabolic intermediate biosynthesis; chorismate biosynthesis; chorismate from D-erythrose 4-phosphate and phosphoenolpyruvate: step 6/7. Its function is as follows. The AROM polypeptide catalyzes 5 consecutive enzymatic reactions in prechorismate polyaromatic amino acid biosynthesis. This Aspergillus clavatus (strain ATCC 1007 / CBS 513.65 / DSM 816 / NCTC 3887 / NRRL 1 / QM 1276 / 107) protein is Pentafunctional AROM polypeptide.